Consider the following 662-residue polypeptide: Histidine decarboxylase (662 aa).

Positions 81 and 194 each coordinate substrate. The residue at position 305 (Lys305) is an N6-(pyridoxal phosphate)lysine.

It belongs to the group II decarboxylase family. As to quaternary structure, homodimer. The cofactor is pyridoxal 5'-phosphate.

The enzyme catalyses L-histidine + H(+) = histamine + CO2. Its pathway is amine and polyamine biosynthesis; histamine biosynthesis; histamine from L-histidine: step 1/1. Catalyzes the biosynthesis of histamine from histidine. The sequence is that of Histidine decarboxylase (HDC) from Homo sapiens (Human).